The primary structure comprises 308 residues: UDP-N-acetylenolpyruvoylglucosamine reductase 2 (308 aa).

Residues 31-197 (RIGGPADYLV…AEVVMALRPA (167 aa)) form the FAD-binding PCMH-type domain. Arginine 176 is a catalytic residue. The active-site Proton donor is the serine 226. The active site involves glutamate 296.

This sequence belongs to the MurB family. The cofactor is FAD.

Its subcellular location is the cytoplasm. It catalyses the reaction UDP-N-acetyl-alpha-D-muramate + NADP(+) = UDP-N-acetyl-3-O-(1-carboxyvinyl)-alpha-D-glucosamine + NADPH + H(+). Its pathway is cell wall biogenesis; peptidoglycan biosynthesis. Functionally, cell wall formation. The protein is UDP-N-acetylenolpyruvoylglucosamine reductase 2 of Symbiobacterium thermophilum (strain DSM 24528 / JCM 14929 / IAM 14863 / T).